The primary structure comprises 301 residues: tRNA dimethylallyltransferase 1 (301 aa).

ATP is bound at residue 11-18; sequence GPTGVGKT. 13–18 provides a ligand contact to substrate; it reads TGVGKT. The tract at residues 36-39 is interaction with substrate tRNA; the sequence is DSRQ.

The protein belongs to the IPP transferase family. In terms of assembly, monomer. It depends on Mg(2+) as a cofactor.

It catalyses the reaction adenosine(37) in tRNA + dimethylallyl diphosphate = N(6)-dimethylallyladenosine(37) in tRNA + diphosphate. Its function is as follows. Catalyzes the transfer of a dimethylallyl group onto the adenine at position 37 in tRNAs that read codons beginning with uridine, leading to the formation of N6-(dimethylallyl)adenosine (i(6)A). This is tRNA dimethylallyltransferase 1 from Bacteroides fragilis (strain YCH46).